The primary structure comprises 469 residues: GTPase Der (469 aa).

EngA-type G domains lie at 30–193 (PVLA…PEVA) and 203–376 (RRVA…ASWD). GTP-binding positions include 36–43 (GRPNVGKS), 83–87 (DTGGW), 145–148 (NKVD), 209–216 (GKPNVGKS), 256–260 (DTAGL), and 321–324 (NKWD). The KH-like domain maps to 377–459 (TRIPTGPLNS…PIRINVRVRE (83 aa)).

It belongs to the TRAFAC class TrmE-Era-EngA-EngB-Septin-like GTPase superfamily. EngA (Der) GTPase family. In terms of assembly, associates with the 50S ribosomal subunit.

Functionally, GTPase that plays an essential role in the late steps of ribosome biogenesis. This chain is GTPase Der, found in Mycobacterium marinum (strain ATCC BAA-535 / M).